The following is a 367-amino-acid chain: Ferrochelatase (367 aa).

Positions 213 and 294 each coordinate Fe cation.

The protein belongs to the ferrochelatase family.

It localises to the cytoplasm. It catalyses the reaction heme b + 2 H(+) = protoporphyrin IX + Fe(2+). It participates in porphyrin-containing compound metabolism; protoheme biosynthesis; protoheme from protoporphyrin-IX: step 1/1. Its function is as follows. Catalyzes the ferrous insertion into protoporphyrin IX. In Dechloromonas aromatica (strain RCB), this protein is Ferrochelatase.